The sequence spans 264 residues: MVTMKDLLECGVHFGHQTRRWNPKTKKFIFGVRKNIHIIDLQKTLRYFRYTYNIVRDASAQGKSIMFVGTKKQANETLKEFAESIQVPYVNYRWLGGMLTNFSTIRKSVRKLEIIEEMENSGQIDLLTKKEKLMILRKKEKLDKYLGGVRHMKKIPDMIFVIDVAKEKIAVAEARKLHIPIVAPLDTNCDPDLVDYPIPGNDDAIRSIRLFCKEMSEAILEGRELMQEEIVHADENSEEIEFVSNEEKEEMLAEIQKEITQGAE.

Belongs to the universal ribosomal protein uS2 family.

The sequence is that of Small ribosomal subunit protein uS2 from Helicobacter pylori (strain P12).